The following is a 169-amino-acid chain: Phosphopantetheine adenylyltransferase (169 aa).

Ser-10 contacts substrate. ATP contacts are provided by residues 10 to 11 and His-18; that span reads SF. Substrate is bound by residues Lys-42, Thr-79, and Arg-93. ATP contacts are provided by residues 94–96, Glu-104, and 129–135; these read GLR and VRPITAT.

Belongs to the bacterial CoaD family. Homohexamer. The cofactor is Mg(2+).

Its subcellular location is the cytoplasm. It carries out the reaction (R)-4'-phosphopantetheine + ATP + H(+) = 3'-dephospho-CoA + diphosphate. Its pathway is cofactor biosynthesis; coenzyme A biosynthesis; CoA from (R)-pantothenate: step 4/5. Its function is as follows. Reversibly transfers an adenylyl group from ATP to 4'-phosphopantetheine, yielding dephospho-CoA (dPCoA) and pyrophosphate. This chain is Phosphopantetheine adenylyltransferase, found in Rhodopseudomonas palustris (strain TIE-1).